The primary structure comprises 558 residues: Serine palmitoyltransferase 1 (558 aa).

Residues 1 to 49 (MAHIPEVLPKSIPIPAFIVTTSSYLWYYFNLVLTQIPGGQFIVSYIKKS) are Lumenal-facing. A helical membrane pass occupies residues 50–84 (HHDDPYRTTVEIGLILYGIIYYLSKPQQKKSLQAQ). Over 85–341 (KPNLSPQEID…GRGLSEHFNM (257 aa)) the chain is Cytoplasmic. Position 121 is a phosphothreonine (T121). Residues 342–371 (DRATAIDITVGSMATALGSTGGFVLGDSVM) form a helical membrane-spanning segment. Residues 372-424 (CLHQRIGSNAYCFSACLPAYTVTSVSKVLKLMDSNNDAVQTLQKLSKSLHDSF) are Lumenal-facing. The helical transmembrane segment at 425–457 (ASDDSLRSYVIVTSSPVSAVLHLQLTPAYRSRK) threads the bilayer. At 458 to 558 (FGYTCEQLFE…ILACCQESNK (101 aa)) the chain is on the cytoplasmic side.

Belongs to the class-II pyridoxal-phosphate-dependent aminotransferase family. In terms of assembly, LCB1 and LCB2 encode essential subunits of the enzyme and form a heterodimer. Component of the SPOTS complex, at least composed of LCB1/2 (LCB1 and/or LCB2), ORM1/2 (ORM1 and/or ORM2), SAC1 and TSC3. Interacts with LCB2 and TSC3. The cofactor is pyridoxal 5'-phosphate.

The protein resides in the cytoplasm. It is found in the endoplasmic reticulum membrane. The catalysed reaction is L-serine + hexadecanoyl-CoA + H(+) = 3-oxosphinganine + CO2 + CoA. It functions in the pathway lipid metabolism; sphingolipid metabolism. Functionally, component of serine palmitoyltransferase (SPT), which catalyzes the committed step in the synthesis of sphingolipids, the condensation of serine with palmitoyl CoA to form the long chain base 3-ketosphinganine. This Saccharomyces cerevisiae (strain ATCC 204508 / S288c) (Baker's yeast) protein is Serine palmitoyltransferase 1 (LCB1).